We begin with the raw amino-acid sequence, 67 residues long: Large ribosomal subunit protein eL24 (67 aa).

Residues C7, C10, C33, and C37 each coordinate Zn(2+). A C4-type zinc finger spans residues 7–37 (CDYCGTDIEPGTGTMFVHKDGATTHFCSSKC). The segment covering 48–60 (RNLEWTDTARGEA) has biased composition (basic and acidic residues). Residues 48–67 (RNLEWTDTARGEAGEAEDEA) are disordered.

It belongs to the eukaryotic ribosomal protein eL24 family. As to quaternary structure, part of the 50S ribosomal subunit. Forms a cluster with proteins L3 and L14. Requires Zn(2+) as cofactor.

Its function is as follows. Binds to the 23S rRNA. This Haloarcula marismortui (strain ATCC 43049 / DSM 3752 / JCM 8966 / VKM B-1809) (Halobacterium marismortui) protein is Large ribosomal subunit protein eL24 (rpl24e).